Here is a 153-residue protein sequence, read N- to C-terminus: Calmodulin-like protein 3 (153 aa).

EF-hand domains are found at residues 1-36 (MDQA…LGIY), 37-72 (IPDK…IMEE), 74-109 (DEEE…LGLK), and 112-147 (RTLE…GGFA). Ca(2+)-binding residues include Asp-14, Asn-16, Asp-18, Lys-20, Glu-25, Asp-50, Asn-52, Asp-54, Tyr-56, Glu-61, Asp-87, Asn-89, Asp-91, Glu-98, Asp-125, Asp-127, Asp-129, Met-131, and Glu-136.

The protein belongs to the calmodulin family.

Potential calcium sensor. The sequence is that of Calmodulin-like protein 3 (CML3) from Arabidopsis thaliana (Mouse-ear cress).